We begin with the raw amino-acid sequence, 465 residues long: Casein kinase 1-like protein 2 (465 aa).

Positions 9–277 (FRLGRKIGGG…LKRLFRDLFI (269 aa)) constitute a Protein kinase domain. ATP is bound by residues 15–23 (IGGGSFGEI) and K38. Residue D128 is the Proton acceptor of the active site. Disordered stretches follow at residues 300 to 344 (STPP…GIPR) and 396 to 428 (REAA…VSRN). The span at 405–428 (SEPSNPQIVEAGSGSNSKIPVSRN) shows a compositional bias: polar residues.

It belongs to the protein kinase superfamily. CK1 Ser/Thr protein kinase family. Casein kinase I subfamily. As to quaternary structure, monomer. Post-translationally, autophosphorylated.

Its subcellular location is the cytoplasm. The protein resides in the nucleus. The enzyme catalyses L-seryl-[protein] + ATP = O-phospho-L-seryl-[protein] + ADP + H(+). The catalysed reaction is L-threonyl-[protein] + ATP = O-phospho-L-threonyl-[protein] + ADP + H(+). In terms of biological role, casein kinases are operationally defined by their preferential utilization of acidic proteins such as caseins as substrates. It can phosphorylate a large number of proteins. The chain is Casein kinase 1-like protein 2 from Arabidopsis thaliana (Mouse-ear cress).